Reading from the N-terminus, the 544-residue chain is Methionine--tRNA ligase 2 (544 aa).

The 'HIGH' region motif lies at 10 to 20 (PYANGSLHLGH). Zn(2+) is bound by residues Cys-141, Cys-144, Cys-153, and Cys-156. The short motif at 329-333 (KLSTS) is the 'KMSKS' region element. Thr-332 contacts ATP.

The protein belongs to the class-I aminoacyl-tRNA synthetase family. MetG type 1 subfamily. Monomer. It depends on Zn(2+) as a cofactor.

The protein resides in the cytoplasm. It catalyses the reaction tRNA(Met) + L-methionine + ATP = L-methionyl-tRNA(Met) + AMP + diphosphate. In terms of biological role, is required not only for elongation of protein synthesis but also for the initiation of all mRNA translation through initiator tRNA(fMet) aminoacylation. The polypeptide is Methionine--tRNA ligase 2 (Bacillus cereus (strain ATCC 14579 / DSM 31 / CCUG 7414 / JCM 2152 / NBRC 15305 / NCIMB 9373 / NCTC 2599 / NRRL B-3711)).